The chain runs to 445 residues: 6-phosphogluconate dehydrogenase, decarboxylating (445 aa).

NADP(+) contacts are provided by residues 1–4, 22–24, 63–65, and Asn-91; these read AVMG, NRS, and VKA. Substrate is bound by residues Asn-91 and 117–119; that span reads SGG. Lys-172 serves as the catalytic Proton acceptor. A substrate-binding site is contributed by 175–176; sequence HN. The Proton donor role is filled by Glu-179. Positions 180, 249, 276, 434, and 440 each coordinate substrate.

It belongs to the 6-phosphogluconate dehydrogenase family. As to quaternary structure, homodimer.

The enzyme catalyses 6-phospho-D-gluconate + NADP(+) = D-ribulose 5-phosphate + CO2 + NADPH. It participates in carbohydrate degradation; pentose phosphate pathway; D-ribulose 5-phosphate from D-glucose 6-phosphate (oxidative stage): step 3/3. In terms of biological role, catalyzes the oxidative decarboxylation of 6-phosphogluconate to ribulose 5-phosphate and CO(2), with concomitant reduction of NADP to NADPH. In Citrobacter amalonaticus, this protein is 6-phosphogluconate dehydrogenase, decarboxylating (gnd).